Reading from the N-terminus, the 200-residue chain is Dephospho-CoA kinase (200 aa).

Positions 4–200 (VIGLTGGIAS…AILKKWNIID (197 aa)) constitute a DPCK domain. 12–17 (ASGKST) lines the ATP pocket.

The protein belongs to the CoaE family.

It is found in the cytoplasm. The catalysed reaction is 3'-dephospho-CoA + ATP = ADP + CoA + H(+). The protein operates within cofactor biosynthesis; coenzyme A biosynthesis; CoA from (R)-pantothenate: step 5/5. Catalyzes the phosphorylation of the 3'-hydroxyl group of dephosphocoenzyme A to form coenzyme A. This chain is Dephospho-CoA kinase, found in Bacillus cereus (strain ZK / E33L).